The sequence spans 404 residues: AT-hook motif nuclear-localized protein 6 (404 aa).

Residues 40–112 (TTVVTPLPPP…TPISSSIPLS (73 aa)) form a disordered region. Over residues 45-55 (PLPPPPAPSSA) the composition is skewed to pro residues. A compositionally biased stretch (low complexity) spans 56-70 (PVPTTVTPGSATAST). A Bipartite nuclear localization signal motif is present at residues 76–84 (KKKRGRPRK). The segment at residues 76–88 (KKKRGRPRKYAPD) is a DNA-binding region (a.T hook). The segment covering 98 to 112 (PTLSPTPISSSIPLS) has biased composition (low complexity). Residues 157 to 299 (GANFTTHQFT…RVMEAFAPPQ (143 aa)) form the PPC domain. Positions 365 to 404 (AYHGYGNMNTGTTHKEEHEDEDGGDDDDDSGDTRSQSHSG) are disordered. The segment covering 382-394 (HEDEDGGDDDDDS) has biased composition (acidic residues).

It localises to the nucleus. Functionally, transcription factor that specifically binds AT-rich DNA sequences related to the nuclear matrix attachment regions (MARs). The chain is AT-hook motif nuclear-localized protein 6 from Arabidopsis thaliana (Mouse-ear cress).